The primary structure comprises 229 residues: 7-cyano-7-deazaguanine synthase (229 aa).

12 to 22 (LSGGMDSCVCA) is a binding site for ATP. Zn(2+)-binding residues include Cys194, Cys202, Cys205, and Cys208.

This sequence belongs to the QueC family. Requires Zn(2+) as cofactor.

It catalyses the reaction 7-carboxy-7-deazaguanine + NH4(+) + ATP = 7-cyano-7-deazaguanine + ADP + phosphate + H2O + H(+). It functions in the pathway purine metabolism; 7-cyano-7-deazaguanine biosynthesis. Functionally, catalyzes the ATP-dependent conversion of 7-carboxy-7-deazaguanine (CDG) to 7-cyano-7-deazaguanine (preQ(0)). This chain is 7-cyano-7-deazaguanine synthase, found in Acidobacterium capsulatum (strain ATCC 51196 / DSM 11244 / BCRC 80197 / JCM 7670 / NBRC 15755 / NCIMB 13165 / 161).